The primary structure comprises 89 residues: Small cysteine-rich protein 1 (89 aa).

Positions 1 to 20 (MDVRFRLCLFLVILVIVANA) are cleaved as a signal peptide. The propeptide occupies 21 to 27 (NVIKEPE).

Belongs to the Cnidaria small cysteine-rich protein (SCRiP) family. gamma subfamily. Contains 4 disulfide bonds.

Its subcellular location is the secreted. The protein localises to the nematocyst. In terms of biological role, induces neurotoxic symptoms on zebrafish. Has also been claimed to be implied in calcification, but tests on homolog proteins suggest that proteins of this family have a neurotoxic function and not a calcification function. This is Small cysteine-rich protein 1 from Acropora millepora (Staghorn coral).